The primary structure comprises 296 residues: Probable transcription factor At1g44810 (296 aa).

A disordered region spans residues 1-119 (MNKKLLNPLE…AKKVSGDDDN (119 aa)). Positions 19-28 (EDVDEEISSG) are enriched in acidic residues. Residues 52 to 72 (TQTLNSPSTEAPTLDSGSETN) are compositionally biased toward polar residues. Residues 97 to 119 (RASEGTSSKDIKRAKKVSGDDDN) show a composition bias toward basic and acidic residues.

Belongs to the GeBP family.

This Arabidopsis thaliana (Mouse-ear cress) protein is Probable transcription factor At1g44810.